Consider the following 1209-residue polypeptide: Neural cell adhesion molecule L1-like protein (1209 aa).

An N-terminal signal peptide occupies residues 1 to 25 (MMELPLCGRGLILSLIFLLLKLSAA). Residues 26–1083 (EIPLSVQQVP…LYDDISTQGW (1058 aa)) are Extracellular-facing. Ig-like C2-type domains lie at 35–124 (PTIV…EEIE) and 128–223 (PGVP…MKLT). Disulfide bonds link C57/C109 and C153/C204. N87 is a glycosylation site (N-linked (GlcNAc...) asparagine). N225 and N299 each carry an N-linked (GlcNAc...) asparagine glycan. Ig-like C2-type domains lie at 235–328 (PKLL…VTVE), 331–417 (PRWK…ANID), 423–510 (PLIK…ANLD), and 515–607 (TKLR…TQVT). Intrachain disulfides connect C262-C310, C352-C401, C445-C494, and C536-C591. N476 is a glycosylation site (N-linked (GlcNAc...) asparagine). Positions 555 to 558 (DGEA) match the DGEA motif. N562 and N580 each carry an N-linked (GlcNAc...) asparagine glycan. Fibronectin type-III domains are found at residues 614–709 (PPGN…TPPA), 714–807 (NPQN…SGED), 812–914 (APVI…TPEG), and 918–1015 (QPSF…LGEG). The tract at residues 696–717 (HASLPSDHHETPPAAPDKNPQN) is disordered. N-linked (GlcNAc...) asparagine glycans are attached at residues N767, N822, N945, and N1027. A helical membrane pass occupies residues 1084-1104 (FIGLMCAIALLTLILLTICFV). Over 1105–1209 (KRNRGGKYSV…SSTATFPLRA (105 aa)) the chain is Cytoplasmic. The segment covering 1115 to 1133 (KEKEDLHPDPEVQSAKDET) has biased composition (basic and acidic residues). A disordered region spans residues 1115-1170 (KEKEDLHPDPEVQSAKDETFGEYSDSDEKPLKGSLRSLNRNMQPTESADSLVEYGE). 3 positions are modified to phosphoserine: S1148, S1161, and S1181. Residues 1150-1162 (RSLNRNMQPTESA) show a composition bias toward polar residues. Residues 1182 to 1186 (FIGAY) carry the FIG[AQ]Y motif.

This sequence belongs to the immunoglobulin superfamily. L1/neurofascin/NgCAM family. In terms of assembly, may interact with L1CAM. May interact with ITGB1/ITGA1 heterodimer and ITGB1/ITGA2 heterodimer as well as with ANK3. In terms of processing, cleavage by metalloprotease ADAM8 in the extracellular part generates 2 soluble forms (125 kDa and 165 kDa) in vitro and is inhibited by metalloprotease inhibitors. In brain extracts, these two soluble forms are also present and are dramatically reduced in mice lacking ADAM8. Cleaved by BACE1. Post-translationally, N-glycosylated. Contains N-linked oligosaccharides with a sulfated carbohydrate structure type HNK-1 (SO4-3-GlcUABeta1,3GalBeta1,4GlcNAc). O-glycosylated. As to expression, expressed in the brain, in the cerebellum and in the spinal cord. Detected in the retina and the optic nerve. Expressed in neurons and glial cells in the central nervous system and by Schwann cells in the peripheral nervous system.

It is found in the cell membrane. Its subcellular location is the secreted. It localises to the extracellular space. The protein localises to the extracellular matrix. In terms of biological role, extracellular matrix and cell adhesion protein that plays a role in nervous system development and in synaptic plasticity. Both soluble and membranous forms promote neurite outgrowth of cerebellar and hippocampal neurons and suppress neuronal cell death. Plays a role in neuronal positioning of pyramidal neurons as well as in regulation of both the number of interneurons and the efficacy of GABAergic synapses. May play a role in regulating cell migration in nerve regeneration and cortical development. Potentiates integrin-dependent cell migration towards extracellular matrix proteins. Recruits ANK3 to the plasma membrane. This Mus musculus (Mouse) protein is Neural cell adhesion molecule L1-like protein (Chl1).